Reading from the N-terminus, the 251-residue chain is Prothoracicostatic peptides (251 aa).

The interval 1–22 (MRKSARGQVCTEAGAGASGDWQ) is disordered. The propeptide occupies 1-77 (MRKSARGQVC…GWQDLNSAWG (77 aa)). A Tryptophan amide modification is found at Trp89. The propeptide occupies 93–138 (GWNDMSSAWGKRGWNDMSSAWGKRGWNDMSSAWGKRGWNDMSSAWG). At Trp152 the chain carries Tryptophan amide. Positions 156-187 (AAEPDYEEIDAAIEQLIPIQQLSDNERMEVPE) are excised as a propeptide. Residues Trp198 and Trp228 each carry the tryptophan amide modification. A disordered region spans residues 227-251 (MWGKRSAPDADAVDDDHESSARDEA).

In terms of tissue distribution, prothoracicostatic peptide 5: Expressed in antennal lobe (AL), corpora cardiaca (CC), corpora allata (CA) and gnathal ganglion (GNG) (at protein level). Expression in AL detected in all animals, in CC, CA and GNG in most (at protein level). Prothoracicostatic peptide 6: Expressed in antennal lobe (AL), corpora cardiaca (CC), corpora allata (CA) and gnathal ganglion (GNG) (at protein level). Expression in AL detected in all animals, expression in GNG in most animals, in CA and CC detected in some animals (at protein level). Prothoracicostatic peptide 7: Expressed in antennal lobe (AL), corpora cardiaca (CC), corpora allata (CA) and gnathal ganglion (GNG) (at protein level). Expression in AL, CA and CC detected in most animals, expression in GNG in some animals (at protein level). Prothoracicostatic peptide precursor-related peptide 2: Expressed in antennal lobe (AL), corpora cardiaca (CC) and corpora allata (CA) with expression detected in few animals (at protein level). Not expressed in gnathal ganglion (GNG) (at protein level). Prothoracicostatic peptide 8: Expressed in antennal lobe (AL), corpora cardiaca (CC), corpora allata (CA) and gnathal ganglion (GNG) (at protein level). Expression in AL detected in all animals, expression in GNG in most animals, in CA and CC detected in some animals (at protein level). Prothoracicostatic peptide precursor-related peptide 3: Expressed in antennal lobe (AL) in few animals (at protein level). Not expressed in corpora cardiaca (CC), corpora allata (CA) and gnathal ganglion (GNG) (at protein level).

Its subcellular location is the secreted. In Agrotis ipsilon (Black cutworm moth), this protein is Prothoracicostatic peptides.